Reading from the N-terminus, the 154-residue chain is Transcriptional repressor NrdR (154 aa).

A zinc finger spans residues 3-34; it reads CPFCGNVDTQVKDSRPAEDNVAIRRRRFCPAC. Residues 49–139 enclose the ATP-cone domain; it reads LVVVKSSGRR…VYKNFQAADD (91 aa).

Belongs to the NrdR family. Requires Zn(2+) as cofactor.

Negatively regulates transcription of bacterial ribonucleotide reductase nrd genes and operons by binding to NrdR-boxes. The protein is Transcriptional repressor NrdR of Paracoccus denitrificans (strain Pd 1222).